Reading from the N-terminus, the 185-residue chain is Bcl-2-modifying factor (185 aa).

Positions 1-28 (MEPPQCVEELEDDVFQPEDGEPGTQPGS) are disordered. The segment covering 8 to 21 (EELEDDVFQPEDGE) has biased composition (acidic residues). An interaction with DLC2 region spans residues 67–75 (DKATQTLSP). The BH3 signature appears at 134-148 (IARKLQCIADQFHRL).

Belongs to the Bcl-2 family. In terms of assembly, interacts with MCL1, BCL2, BCL2L1/BCL-Xl, BCL2A1 and BCL2L2/BCL-w. Interacts with the myosin V actin motor complex through its binding to DLC2.

Functionally, may play a role in apoptosis. The sequence is that of Bcl-2-modifying factor (Bmf) from Rattus norvegicus (Rat).